The primary structure comprises 316 residues: Transaldolase (316 aa).

The active-site Schiff-base intermediate with substrate is Lys-125.

Belongs to the transaldolase family. Type 1 subfamily. As to quaternary structure, homodimer.

It localises to the cytoplasm. The catalysed reaction is D-sedoheptulose 7-phosphate + D-glyceraldehyde 3-phosphate = D-erythrose 4-phosphate + beta-D-fructose 6-phosphate. It functions in the pathway carbohydrate degradation; pentose phosphate pathway; D-glyceraldehyde 3-phosphate and beta-D-fructose 6-phosphate from D-ribose 5-phosphate and D-xylulose 5-phosphate (non-oxidative stage): step 2/3. Transaldolase is important for the balance of metabolites in the pentose-phosphate pathway. This is Transaldolase from Acidovorax sp. (strain JS42).